The sequence spans 668 residues: DNA ligase (668 aa).

NAD(+)-binding positions include 37–41 (DNVYD), 86–87 (SM), and glutamate 116. Lysine 118 acts as the N6-AMP-lysine intermediate in catalysis. NAD(+) contacts are provided by arginine 139, glutamate 173, lysine 288, and lysine 312. Residues cysteine 406, cysteine 409, cysteine 424, and cysteine 429 each contribute to the Zn(2+) site. In terms of domain architecture, BRCT spans 591–668 (IPDNPFKDKT…TEEEAIAQIK (78 aa)).

It belongs to the NAD-dependent DNA ligase family. LigA subfamily. Mg(2+) is required as a cofactor. It depends on Mn(2+) as a cofactor.

The enzyme catalyses NAD(+) + (deoxyribonucleotide)n-3'-hydroxyl + 5'-phospho-(deoxyribonucleotide)m = (deoxyribonucleotide)n+m + AMP + beta-nicotinamide D-nucleotide.. In terms of biological role, DNA ligase that catalyzes the formation of phosphodiester linkages between 5'-phosphoryl and 3'-hydroxyl groups in double-stranded DNA using NAD as a coenzyme and as the energy source for the reaction. It is essential for DNA replication and repair of damaged DNA. This Lactobacillus acidophilus (strain ATCC 700396 / NCK56 / N2 / NCFM) protein is DNA ligase.